Here is a 392-residue protein sequence, read N- to C-terminus: Alkaline phosphatase L (392 aa).

Residues 1–23 (MYKRSLIAASLSVAALVSAQAMA) form the signal peptide.

The protein belongs to the PstS family. Homodimer.

It localises to the secreted. The protein resides in the periplasm. It catalyses the reaction a phosphate monoester + H2O = an alcohol + phosphate. Has both a phosphomonoesterase and phosphodiesterase activity. This chain is Alkaline phosphatase L, found in Pseudomonas aeruginosa.